A 430-amino-acid chain; its full sequence is Tol-Pal system protein TolB (430 aa).

A signal peptide spans 1–21; the sequence is MKQAFRVALGFLILWASVLHA.

This sequence belongs to the TolB family. As to quaternary structure, the Tol-Pal system is composed of five core proteins: the inner membrane proteins TolA, TolQ and TolR, the periplasmic protein TolB and the outer membrane protein Pal. They form a network linking the inner and outer membranes and the peptidoglycan layer.

It localises to the periplasm. Part of the Tol-Pal system, which plays a role in outer membrane invagination during cell division and is important for maintaining outer membrane integrity. TolB occupies a key intermediary position in the Tol-Pal system because it communicates directly with both membrane-embedded components, Pal in the outer membrane and TolA in the inner membrane. This chain is Tol-Pal system protein TolB, found in Serratia proteamaculans (strain 568).